Consider the following 136-residue polypeptide: ATP synthase epsilon chain (136 aa).

Residues 100–120 (QGALEEANRGEDKPNQLKASN) are disordered. A compositionally biased stretch (basic and acidic residues) spans 105–114 (EANRGEDKPN).

This sequence belongs to the ATPase epsilon chain family. F-type ATPases have 2 components, CF(1) - the catalytic core - and CF(0) - the membrane proton channel. CF(1) has five subunits: alpha(3), beta(3), gamma(1), delta(1), epsilon(1). CF(0) has three main subunits: a, b and c.

The protein resides in the cellular thylakoid membrane. Functionally, produces ATP from ADP in the presence of a proton gradient across the membrane. The sequence is that of ATP synthase epsilon chain (atpC) from Synechocystis sp. (strain ATCC 27184 / PCC 6803 / Kazusa).